A 1941-amino-acid chain; its full sequence is Myosin light chain kinase, smooth muscle (1941 aa).

2 Ig-like C2-type domains span residues 33–122 (PAFI…VELT) and 156–244 (PKFA…AELS). Cys-177 and Cys-228 are oxidised to a cystine. Phosphotyrosine; by ABL1 is present on Tyr-226. Residues 255-329 (AVRGTKAPSP…RKVPQSSILQ (75 aa)) form a disordered region. A compositionally biased stretch (polar residues) spans 286-305 (NCPSPQRSGSSARATNSHLK). Ser-295 carries the phosphoserine modification. Basic and acidic residues predominate over residues 306–320 (SPQEPKPKLCEDAPR). Residues Ser-333 and Ser-355 each carry the phosphoserine modification. 4 Ig-like C2-type domains span residues 402-485 (PRFE…GQVS), 502-587 (PSFS…ATVT), 611-699 (PIFL…AVLT), and 709-809 (PWFI…APPR). Disulfide bonds link Cys-423–Cys-475 and Cys-523–Cys-571. Tyr-452 carries the post-translational modification Phosphotyrosine; by ABL1 and SRC. A disulfide bridge connects residues Cys-730 and Cys-793. Phosphotyrosine; by ABL1 is present on Tyr-780. Repeat copies occupy residues 856-883 (DVRGLLKRRVETRLHTEEAIRQQEVGQL), 884-911 (DFRDLLGKKVSTKTVSEDDLKDIPAEQM), 912-939 (DFRANLQRQVKPKTISEEERKVHSPQQV), and 940-966 (DFRSVLAKKGTPKTPVPEKAPPKAATP). The interval 856–985 (DVRGLLKRRV…KKSPSENGGN (130 aa)) is 5 X 28 AA approximate tandem repeats. The interval 911–951 (MDFRANLQRQVKPKTISEEERKVHSPQQVDFRSVLAKKGTP) is actin-binding (calcium/calmodulin-sensitive). The tract at residues 920–1120 (QVKPKTISEE…KRPESQGSAP (201 aa)) is disordered. Phosphoserine is present on Ser-935. The tract at residues 936 to 951 (PQQVDFRSVLAKKGTP) is calmodulin-binding. The 1-5; truncated repeat unit spans residues 967–985 (DFRSVLGGKKKSPSENGGN). 5 consecutive repeat copies span residues 990 to 1002 (LNVKAGESPTPAG), 1003 to 1014 (DAQAIGALKPVG), 1015 to 1026 (NAKPAETPKPIG), 1027 to 1038 (NAKPTETLKPVG), and 1039 to 1049 (NTKPAETLKPI). The interval 990–1049 (LNVKAGESPTPAGDAQAIGALKPVGNAKPAETPKPIGNAKPTETLKPVGNTKPAETLKPI) is 5 X 12 AA approximate tandem repeats. An actin-binding (calcium/calmodulin-insensitive) region spans residues 1048-1482 (PIANAQPSGS…TVTVNTEQKV (435 aa)). Polar residues predominate over residues 1052–1065 (AQPSGSLKPVTNAQ). A compositionally biased stretch (basic and acidic residues) spans 1085–1099 (AGKEEVKEVKNDVNC). One can recognise an Ig-like C2-type 7 domain in the interval 1120–1208 (PVFKEKLQDV…GQAECSCQVT (89 aa)). A disulfide bridge links Cys-1141 with Cys-1192. The segment at 1212–1257 (AQTSENTKAPEMKSRRPKSSLPPVLGTESDATVKKKPAPKTPTKAA) is disordered. Residues 1260 to 1348 (PQIIQFPEDQ…GSRQAQVNLT (89 aa)) form the Ig-like C2-type 8 domain. The Fibronectin type-III domain maps to 1356–1449 (PAGTPCASDI…ESELTAVGEK (94 aa)). The interval 1435 to 1469 (SEPSQESELTAVGEKPEEPKDEVEVSDDDEKEPEV) is disordered. The span at 1453 to 1467 (PKDEVEVSDDDEKEP) shows a compositional bias: acidic residues. Position 1460 is a phosphoserine (Ser-1460). Tyr-1471 carries the phosphotyrosine; by ABL1 modification. A Protein kinase domain is found at 1486 to 1741 (YDIEERLGSG…CTQCLQHPWL (256 aa)). ATP is bound by residues 1492–1500 (LGSGKFGQV) and Lys-1515. The residue at position 1597 (Tyr-1597) is a Phosphotyrosine; by ABL1. Asp-1607 functions as the Proton acceptor in the catalytic mechanism. Tyr-1657 carries the phosphotyrosine; by ABL1 modification. Residues 1733 to 1796 (TQCLQHPWLM…SGLSGRKSST (64 aa)) form a calmodulin-binding region. Ser-1781, Ser-1782, Ser-1794, Ser-1795, and Ser-1798 each carry phosphoserine. Residues 1789–1809 (LSGRKSSTGSPTSPINAEKLE) are disordered. The segment covering 1792–1803 (RKSSTGSPTSPI) has biased composition (polar residues). A Phosphothreonine modification is found at Thr-1800. A Phosphoserine modification is found at Ser-1801. The Ig-like C2-type 9 domain maps to 1831-1920 (PYFSKTIRDL…GEATCTAELI (90 aa)). Cys-1852 and Cys-1904 are oxidised to a cystine.

Belongs to the protein kinase superfamily. CAMK Ser/Thr protein kinase family. As to quaternary structure, all isoforms including Telokin bind calmodulin. Interacts with CTTN; this interaction is reduced during thrombin-induced endothelial cell (EC) contraction but is promoted by the barrier-protective agonist sphingosine 1-phosphate (S1P) within lamellipodia. A complex made of ABL1, CTTN and MYLK regulates cortical actin-based cytoskeletal rearrangement critical to sphingosine 1-phosphate (S1P)-mediated endothelial cell (EC) barrier enhancement. Binds to NAA10/ARD1. Interacts with SVIL and PTK2B/PYK2. It depends on Mg(2+) as a cofactor. Requires Ca(2+) as cofactor. Post-translationally, can probably be down-regulated by phosphorylation. Tyrosine phosphorylation by ABL1 increases kinase activity, reverses MLCK-mediated inhibition of Arp2/3-mediated actin polymerization, and enhances CTTN-binding. Phosphorylation by SRC at Tyr-452 promotes CTTN binding. The C-terminus is deglutamylated by AGTPBP1/CCP1, AGBL1/CCP4 and AGBL4/CCP6, leading to the formation of Myosin light chain kinase, smooth muscle, deglutamylated form. The consequences of C-terminal deglutamylation are unknown. Smooth muscle isoform is expressed in all tissues with highest levels in bladder, uterus, vas deferens, colon, ileum, and tracheae. Isoform 1 is expressed in lung, bladder, and vas deferens. Telokin is expressed in smooth muscle cells of the gut, reproductive tract and urinary tract, including in uterus, vas deferens, bladder, colon, kidney, ureter and ovary. Telokin is also detected in the trachea.

It localises to the cytoplasm. Its subcellular location is the cell projection. It is found in the lamellipodium. The protein localises to the cleavage furrow. The protein resides in the cytoskeleton. It localises to the stress fiber. It carries out the reaction L-seryl-[myosin light chain] + ATP = O-phospho-L-seryl-[myosin light chain] + ADP + H(+). The catalysed reaction is L-threonyl-[myosin light chain] + ATP = O-phospho-L-threonyl-[myosin light chain] + ADP + H(+). In terms of biological role, calcium/calmodulin-dependent myosin light chain kinase implicated in smooth muscle contraction via phosphorylation of myosin light chains (MLC). Also regulates actin-myosin interaction through a non-kinase activity. Phosphorylates PTK2B/PYK2 and myosin light-chains. Involved in the inflammatory response (e.g. apoptosis, vascular permeability, leukocyte diapedesis), cell motility and morphology, airway hyperreactivity and other activities relevant to asthma. Required for tonic airway smooth muscle contraction that is necessary for physiological and asthmatic airway resistance. Necessary for gastrointestinal motility. Implicated in the regulation of endothelial as well as vascular permeability, probably via the regulation of cytoskeletal rearrangements. In the nervous system it has been shown to control the growth initiation of astrocytic processes in culture and to participate in transmitter release at synapses formed between cultured sympathetic ganglion cells. Critical participant in signaling sequences that result in fibroblast apoptosis. Plays a role in the regulation of epithelial cell survival. Required for epithelial wound healing, especially during actomyosin ring contraction during purse-string wound closure. Mediates RhoA-dependent membrane blebbing. Triggers TRPC5 channel activity in a calcium-dependent signaling, by inducing its subcellular localization at the plasma membrane. Promotes cell migration (including tumor cells) and tumor metastasis. PTK2B/PYK2 activation by phosphorylation mediates ITGB2 activation and is thus essential to trigger neutrophil transmigration during acute lung injury (ALI). May regulate optic nerve head astrocyte migration. Probably involved in mitotic cytoskeletal regulation. Regulates tight junction probably by modulating ZO-1 exchange in the perijunctional actomyosin ring. Mediates burn-induced microvascular barrier injury; triggers endothelial contraction in the development of microvascular hyperpermeability by phosphorylating MLC. Essential for intestinal barrier dysfunction. Mediates Giardia spp.-mediated reduced epithelial barrier function during giardiasis intestinal infection via reorganization of cytoskeletal F-actin and tight junctional ZO-1. Necessary for hypotonicity-induced Ca(2+) entry and subsequent activation of volume-sensitive organic osmolyte/anion channels (VSOAC) in cervical cancer cells. This Mus musculus (Mouse) protein is Myosin light chain kinase, smooth muscle.